A 312-amino-acid chain; its full sequence is Serpentine receptor class gamma-31 (312 aa).

The next 7 helical transmembrane spans lie at 6–26, 38–58, 92–112, 132–152, 180–200, 218–238, and 259–279; these read LITQ…TVVF, FLKL…NFYI, FIFC…LTSI, TYIL…PLLV, FILV…IICW, LFLV…IAML, and LLSP…LIIF.

It belongs to the nematode receptor-like protein srg family.

It localises to the membrane. The polypeptide is Serpentine receptor class gamma-31 (srg-31) (Caenorhabditis elegans).